Here is a 396-residue protein sequence, read N- to C-terminus: 1-deoxy-D-xylulose 5-phosphate reductoisomerase (396 aa).

8 residues coordinate NADPH: Thr10, Gly11, Ser12, Ile13, Gly36, Lys37, Asn38, and Asn124. Residue Lys125 coordinates 1-deoxy-D-xylulose 5-phosphate. Residue Glu126 coordinates NADPH. Asp150 contacts Mn(2+). 1-deoxy-D-xylulose 5-phosphate is bound by residues Ser151, Glu152, Ser186, and His209. Position 152 (Glu152) interacts with Mn(2+). Residue Gly215 coordinates NADPH. Positions 222, 227, 228, and 231 each coordinate 1-deoxy-D-xylulose 5-phosphate. Glu231 is a Mn(2+) binding site.

It belongs to the DXR family. Mg(2+) serves as cofactor. Requires Mn(2+) as cofactor.

The enzyme catalyses 2-C-methyl-D-erythritol 4-phosphate + NADP(+) = 1-deoxy-D-xylulose 5-phosphate + NADPH + H(+). Its pathway is isoprenoid biosynthesis; isopentenyl diphosphate biosynthesis via DXP pathway; isopentenyl diphosphate from 1-deoxy-D-xylulose 5-phosphate: step 1/6. Functionally, catalyzes the NADPH-dependent rearrangement and reduction of 1-deoxy-D-xylulose-5-phosphate (DXP) to 2-C-methyl-D-erythritol 4-phosphate (MEP). This is 1-deoxy-D-xylulose 5-phosphate reductoisomerase from Glaesserella parasuis serovar 5 (strain SH0165) (Haemophilus parasuis).